We begin with the raw amino-acid sequence, 366 residues long: Inhibin alpha chain (366 aa).

The first 20 residues, 1-20 (MVIQPSLLLLLLLTLQDVDS), serve as a signal peptide directing secretion. Residues 21–63 (CQGPELVRELVLAKVKALFLDALGPPAMDGEGGGPGIRRLPRR) constitute a propeptide that is removed on maturation. A propeptide spans 64-233 (HALGGFMHRT…APSAGERARR (170 aa)) (inhibin alpha N-terminal region). N-linked (GlcNAc...) asparagine glycosylation is found at N147 and N269. 3 disulfide bridges follow: C263–C328, C292–C363, and C296–C365.

This sequence belongs to the TGF-beta family. As to quaternary structure, dimeric, linked by one or more disulfide bonds. Activin B is a dimer of alpha and beta-B. Inhibin A is a dimer of alpha and beta-A. Inhibin B is a dimer of alpha and beta-B. Interacts with TGFBR3L; this interaction regulates female fertility. Post-translationally, proteolytic processing yields a number of bioactive forms, consisting either solely of the mature alpha chain, of the most N-terminal propeptide linked through a disulfide bond to the mature alpha chain, or of the entire proprotein. As to expression, mainly expressed in ovary and testis. Alpha- and beta-B-subunits are the predominant forms found in testis. Also found in placenta, pituitary, adrenal gland, bone marrow, kidney, spinal cord and brain.

It localises to the secreted. In terms of biological role, inhibins and activins inhibit and activate, respectively, the secretion of follitropin by the pituitary gland. Inhibins/activins are involved in regulating a number of diverse functions such as hypothalamic and pituitary hormone secretion, gonadal hormone secretion, germ cell development and maturation, erythroid differentiation, insulin secretion, nerve cell survival, embryonic axial development or bone growth, depending on their subunit composition. Inhibins appear to oppose the functions of activins. Inhibin A is a dimer of alpha/INHA and beta-A/INHBA that functions as a feedback regulator in the hypothalamic-pituitary-gonadal (HPG) axis. Inhibits the secretion of FSH from the anterior pituitary gland by acting on pituitary gonadotrope cells. Antagonizes activin A by binding to the proteoglycan, betaglycan, and forming a stable complex with and, thereby, sequestering type II activin receptors while excluding type I receptor. Functionally, inhibin B is a dimer of alpha and beta-B that plays a crucial role in the regulation of the reproductive system by inhibiting the secretion of follicle-stimulating hormone (FSH) from the anterior pituitary gland. Thereby, maintains reproductive homeostasis in both males and females. Acts as a more potent suppressor of FSH release than inhibin A. Functions as competitive receptor antagonist binding activin type II receptors with high affinity in the presence of the TGF-beta type III coreceptor/TGFBR3L. The chain is Inhibin alpha chain (Inha) from Rattus norvegicus (Rat).